A 405-amino-acid chain; its full sequence is Serine/threonine-protein kinase SSN3 (405 aa).

The Protein kinase domain occupies 40-350 (YEIIGYIAAG…ANDALLHPYF (311 aa)). Residues 46-54 (IAAGTYGRV) and Lys-71 each bind ATP. The active-site Proton acceptor is Asp-173. The tract at residues 377–405 (DSDIKTMTYQGTKRGSQGGDNLHPRKKQK) is disordered. Residues 381 to 391 (KTMTYQGTKRG) show a composition bias toward polar residues.

The protein belongs to the protein kinase superfamily. CMGC Ser/Thr protein kinase family. CDC2/CDKX subfamily. Component of the srb8-11 complex, a regulatory module of the Mediator complex. Mg(2+) serves as cofactor.

Its subcellular location is the nucleus. It carries out the reaction L-seryl-[protein] + ATP = O-phospho-L-seryl-[protein] + ADP + H(+). The catalysed reaction is L-threonyl-[protein] + ATP = O-phospho-L-threonyl-[protein] + ADP + H(+). The enzyme catalyses [DNA-directed RNA polymerase] + ATP = phospho-[DNA-directed RNA polymerase] + ADP + H(+). In terms of biological role, component of the srb8-11 complex. The srb8-11 complex is a regulatory module of the Mediator complex which is itself dependent transcription. The srb8-11 complex may be involved in the transcriptional repression of a subset of genes regulated by Mediator. It may inhibit the association of the Mediator complex with RNA polymerase II to form the holoenzyme complex. The srb8-11 complex phosphorylates the C-terminal domain (CTD) of the largest subunit of RNA polymerase II. This chain is Serine/threonine-protein kinase SSN3 (SSN3), found in Yarrowia lipolytica (strain CLIB 122 / E 150) (Yeast).